We begin with the raw amino-acid sequence, 144 residues long: Signal recognition particle 19 kDa protein (144 aa).

The segment at 117–144 (TRTQKTGGGDQSLQQGEGSKKGKGKKKK) is disordered.

This sequence belongs to the SRP19 family. Component of a signal recognition particle complex that consists of a 7SL RNA molecule of 300 nucleotides and six protein subunits: SRP72, SRP68, SRP54, SRP19, SRP14 and SRP9. Interacts with IPO5, IPO7, IPO8, KPNB1 and TNPO1. Interactions with IPO8 and TNPO1 may be involved in SRP19 import into the nucleus.

It localises to the cytoplasm. Its subcellular location is the nucleus. It is found in the nucleolus. The protein resides in the nucleoplasm. Its function is as follows. Component of the signal recognition particle (SRP) complex, a ribonucleoprotein complex that mediates the cotranslational targeting of secretory and membrane proteins to the endoplasmic reticulum (ER). Binds directly to 7SL RNA. Mediates binding of SRP54 to the SRP complex. This chain is Signal recognition particle 19 kDa protein, found in Canis lupus familiaris (Dog).